A 473-amino-acid chain; its full sequence is Photosystem II CP43 reaction center protein (473 aa).

Positions 1–14 are excised as a propeptide; it reads MKTLYSLRRFYPVE. N-acetylthreonine is present on Thr15. Thr15 carries the post-translational modification Phosphothreonine. 5 helical membrane passes run 69-93, 134-155, 178-200, 255-275, and 291-312; these read LFEVAHFVPEKPMYEQGLILLPHLA, LIGPETLEESFPFFGYVWKDKN, KALYFGGVYDTWAPGGGDVRKIT, KPFAWARRAFIWSGEAYLSYS, and WFNNTAYPSEFYGPTGPEASQA. Residue Glu367 participates in [CaMn4O5] cluster binding. Residues 447-471 traverse the membrane as a helical segment; sequence RARAAAAGFEKGIDRDTEPVLSMTP.

The protein belongs to the PsbB/PsbC family. PsbC subfamily. In terms of assembly, PSII is composed of 1 copy each of membrane proteins PsbA, PsbB, PsbC, PsbD, PsbE, PsbF, PsbH, PsbI, PsbJ, PsbK, PsbL, PsbM, PsbT, PsbX, PsbY, PsbZ, Psb30/Ycf12, at least 3 peripheral proteins of the oxygen-evolving complex and a large number of cofactors. It forms dimeric complexes. Binds multiple chlorophylls and provides some of the ligands for the Ca-4Mn-5O cluster of the oxygen-evolving complex. It may also provide a ligand for a Cl- that is required for oxygen evolution. PSII binds additional chlorophylls, carotenoids and specific lipids. serves as cofactor.

It is found in the plastid. Its subcellular location is the chloroplast thylakoid membrane. Its function is as follows. One of the components of the core complex of photosystem II (PSII). It binds chlorophyll and helps catalyze the primary light-induced photochemical processes of PSII. PSII is a light-driven water:plastoquinone oxidoreductase, using light energy to abstract electrons from H(2)O, generating O(2) and a proton gradient subsequently used for ATP formation. In Angiopteris evecta (Mule's foot fern), this protein is Photosystem II CP43 reaction center protein.